Here is a 377-residue protein sequence, read N- to C-terminus: Succinyl-diaminopimelate desuccinylase (377 aa).

His67 is a Zn(2+) binding site. Asp69 is an active-site residue. Asp100 contacts Zn(2+). The Proton acceptor role is filled by Glu134. Zn(2+)-binding residues include Glu135, Glu163, and His349.

The protein belongs to the peptidase M20A family. DapE subfamily. In terms of assembly, homodimer. Requires Zn(2+) as cofactor. Co(2+) serves as cofactor.

It carries out the reaction N-succinyl-(2S,6S)-2,6-diaminopimelate + H2O = (2S,6S)-2,6-diaminopimelate + succinate. It participates in amino-acid biosynthesis; L-lysine biosynthesis via DAP pathway; LL-2,6-diaminopimelate from (S)-tetrahydrodipicolinate (succinylase route): step 3/3. Functionally, catalyzes the hydrolysis of N-succinyl-L,L-diaminopimelic acid (SDAP), forming succinate and LL-2,6-diaminopimelate (DAP), an intermediate involved in the bacterial biosynthesis of lysine and meso-diaminopimelic acid, an essential component of bacterial cell walls. This is Succinyl-diaminopimelate desuccinylase from Haemophilus influenzae (strain 86-028NP).